We begin with the raw amino-acid sequence, 349 residues long: MVRAKRKLDHIEYALSTGQSRTHGFHDIDFVHQSLPNSSYETITCETKIGELSLSSPIFINAMTGGGGEKTLHINEQLAYVAKHHNLAMAVGSQMAALKDESEAASYKIIRKVNPNGIFFANLGSEATVEQAERAVDMVEANALQIHLNVIQELTMPEGDRDFTGVLQRIEKIVLNSKVPVIVKEVGFGMSKETMQQLASVGVTAIDIGGQGGTNFAAVENERRQRMLSYFNNWGIQTATSIIEATSTNNNLSFIASGGIQTALDVAKAIALGANTTAFAGYFLRILMEDGIEKLVDEIDLLHTDLKFIMTALGAKTIEELQSVPLVIKGETYHWLTQRGIDTTHYSRR.

Arginine 6–lysine 7 lines the substrate pocket. FMN is bound by residues alanine 62–threonine 64, serine 93, and asparagine 122. Glutamine 152 contributes to the substrate binding site. Glutamate 153 contacts Mg(2+). Residues lysine 184, threonine 214, glycine 258–glycine 259, and alanine 280–glycine 281 contribute to the FMN site.

It belongs to the IPP isomerase type 2 family. Homooctamer. Dimer of tetramers. The cofactor is FMN. NADPH serves as cofactor. It depends on Mg(2+) as a cofactor.

The protein resides in the cytoplasm. The enzyme catalyses isopentenyl diphosphate = dimethylallyl diphosphate. In terms of biological role, involved in the biosynthesis of isoprenoids. Catalyzes the 1,3-allylic rearrangement of the homoallylic substrate isopentenyl (IPP) to its allylic isomer, dimethylallyl diphosphate (DMAPP). This is Isopentenyl-diphosphate delta-isomerase from Bacillus thuringiensis subsp. konkukian (strain 97-27).